Consider the following 340-residue polypeptide: tRNA N6-adenosine threonylcarbamoyltransferase (340 aa).

Fe cation is bound by residues H111 and H115. Substrate-binding positions include V133–G137, D166, G179, D183, and N272. D300 is a Fe cation binding site.

Belongs to the KAE1 / TsaD family. Fe(2+) serves as cofactor.

It is found in the cytoplasm. The enzyme catalyses L-threonylcarbamoyladenylate + adenosine(37) in tRNA = N(6)-L-threonylcarbamoyladenosine(37) in tRNA + AMP + H(+). Functionally, required for the formation of a threonylcarbamoyl group on adenosine at position 37 (t(6)A37) in tRNAs that read codons beginning with adenine. Is involved in the transfer of the threonylcarbamoyl moiety of threonylcarbamoyl-AMP (TC-AMP) to the N6 group of A37, together with TsaE and TsaB. TsaD likely plays a direct catalytic role in this reaction. The chain is tRNA N6-adenosine threonylcarbamoyltransferase from Geobacter sulfurreducens (strain ATCC 51573 / DSM 12127 / PCA).